The following is a 336-amino-acid chain: Phosphonate dehydrogenase (336 aa).

Residues 155–156, E175, 235–237, and D261 each bind NAD(+); these read AI and PCR. Residue R237 is part of the active site. E266 is a catalytic residue. H292 serves as the catalytic Proton donor. 292 to 295 is an NAD(+) binding site; the sequence is HIGS.

As to quaternary structure, homodimer.

The enzyme catalyses phosphonate + NAD(+) + H2O = phosphate + NADH + H(+). With respect to regulation, inhibited by NaCl, NADH and sulfite. In terms of biological role, catalyzes phosphite (phosphonate) oxidation. The polypeptide is Phosphonate dehydrogenase (ptxD) (Stutzerimonas stutzeri (Pseudomonas stutzeri)).